The following is a 1447-amino-acid chain: DNA-directed RNA polymerase subunit beta' (1447 aa).

Residues Cys70, Cys72, Cys85, and Cys88 each coordinate Zn(2+). Positions 460, 462, and 464 each coordinate Mg(2+). 4 residues coordinate Zn(2+): Cys890, Cys964, Cys971, and Cys974.

Belongs to the RNA polymerase beta' chain family. As to quaternary structure, the RNAP catalytic core consists of 2 alpha, 1 beta, 1 beta' and 1 omega subunit. When a sigma factor is associated with the core the holoenzyme is formed, which can initiate transcription. Requires Mg(2+) as cofactor. Zn(2+) is required as a cofactor.

The catalysed reaction is RNA(n) + a ribonucleoside 5'-triphosphate = RNA(n+1) + diphosphate. In terms of biological role, DNA-dependent RNA polymerase catalyzes the transcription of DNA into RNA using the four ribonucleoside triphosphates as substrates. This Desulfosudis oleivorans (strain DSM 6200 / JCM 39069 / Hxd3) (Desulfococcus oleovorans) protein is DNA-directed RNA polymerase subunit beta'.